The following is a 448-amino-acid chain: Trigger factor (448 aa).

The PPIase FKBP-type domain occupies 172–257; that stretch reads GDRVTVDFVG…MKKIEWPHLP (86 aa).

It belongs to the FKBP-type PPIase family. Tig subfamily.

It localises to the cytoplasm. It carries out the reaction [protein]-peptidylproline (omega=180) = [protein]-peptidylproline (omega=0). In terms of biological role, involved in protein export. Acts as a chaperone by maintaining the newly synthesized protein in an open conformation. Functions as a peptidyl-prolyl cis-trans isomerase. The chain is Trigger factor from Burkholderia lata (strain ATCC 17760 / DSM 23089 / LMG 22485 / NCIMB 9086 / R18194 / 383).